The chain runs to 183 residues: uncharacterized protein (183 aa).

The span at 105–149 (YNTNNSNTNTNYNNNNNNNNNNNNNNNNNNNKNNNNNNNNNNSNS) shows a compositional bias: low complexity. Positions 105 to 151 (YNTNNSNTNTNYNNNNNNNNNNNNNNNNNNNKNNNNNNNNNNSNSKI) are disordered.

This is an uncharacterized protein from Dictyostelium discoideum (Social amoeba).